Consider the following 701-residue polypeptide: L-glutamate oxidase precursor (701 aa).

The first 14 residues, 1–14 (MTTDTARRHTGAER), serve as a signal peptide directing secretion. Ala69, Glu88, Ala89, Arg97, Met123, Arg124, Met354, and Ser409 together coordinate FAD. Positions 481 to 520 (LALPQSVRNLPTGLLGAHPSVDESRIGEEQVEYYRNSELR) are excised as a propeptide. FAD-binding residues include Glu645, Trp653, and Ile654. Positions 684 to 701 (RRGAAAATEPMREEALTS) are excised as a propeptide.

It belongs to the flavin monoamine oxidase family. LGOX subfamily. The LGOX precursor forms homodimers. The mature enzyme is a heterohexamer composed of 2 alpha chains, 2 beta chains and 2 gamma chains (alpha2beta2gamma2). The cofactor is FAD. Post-translationally, the precursor form is proteolytically cleaved by an endopeptidase into alpha, beta and gamma chains, which form the stable mature enzyme. Activation by proteolysis occurs after secretion.

Its subcellular location is the secreted. The enzyme catalyses L-glutamate + O2 + H2O = H2O2 + 2-oxoglutarate + NH4(+). Produced as a single polypeptide precursor and is activated by proteolytic cleavage. The LGOX precursor is an active enzyme, but it exhibits lower catalytic efficiency and lower thermostability compared with the mature hexameric LGOX. The mature form is strongly inhibited by p-chloromercuribenzoate, but not by CuCl(2), EDTA and diethyldithiocarbamate. In terms of biological role, catalyzes the oxidative deamination of L-glutamate to 2-ketoglutarate along with the production of ammonia and hydrogen peroxide. Shows strict substrate specificity for L-glutamate, and exhibits only very weak activity with L-aspartate. The chain is L-glutamate oxidase precursor from Streptomyces sp.